A 534-amino-acid chain; its full sequence is Allene oxide synthase 1, chloroplastic (534 aa).

Disordered stretches follow at residues 1 to 31 and 43 to 71; these read MAST…SSYR and EIPP…LPAQ. The transit peptide at 1 to 69 directs the protein to the chloroplast; the sequence is MASTSLSLPS…SPPVKQAKLP (69 aa). Low complexity-rich tracts occupy residues 17–31 and 43–62; these read SHTS…SSYR and EIPP…SSPP. Heme b-binding residues include Lys-149, His-180, and Lys-184. Residues Asn-337 and Lys-343 each contribute to the (13S)-hydroperoxy-(9Z,11E)-octadecadienoate site. Asn-337 provides a ligand contact to (13S)-hydroperoxy-(9Z,11E,15Z)-octadecatrienoate. Positions 485 and 487 each coordinate heme b.

This sequence belongs to the cytochrome P450 family. Requires heme b as cofactor. As to expression, expressed in flowers. Detected in stems and roots, but not in leaves and fruits under non-inducing conditions.

It localises to the plastid. Its subcellular location is the chloroplast. The catalysed reaction is (13S)-hydroperoxy-(9Z,11E,15Z)-octadecatrienoate = (9Z,13S,15Z)-12,13-epoxyoctadeca-9,11,15-trienoate + H2O. The enzyme catalyses (13S)-hydroperoxy-(9Z,11E)-octadecadienoate = (9Z,13S)-12,13-epoxyoctadeca-9,11-dienoate + H2O. Functionally, cytochrome P450 of the CYP74A subfamily involved in the biosynthesis of jasmonic acid from lipoxygenase-derived hydroperoxides of free fatty acids. Catalyzes the synthesis of unstable allene oxide, which is further converted spontaneously by hydrolysis or cyclization. Can use 13S-hydroperoxy-9(Z),11(E),15(Z)-octadecatrienoic acid (13-HPOT) and 13S-hydroperoxy-9(Z),11(E)-octadecadienoic acid (13-HPOD) as substrates. This chain is Allene oxide synthase 1, chloroplastic, found in Solanum lycopersicum (Tomato).